Here is a 310-residue protein sequence, read N- to C-terminus: Nodulation protein D 1 (310 aa).

The HTH lysR-type domain maps to 6–63 (LDLNLLVALDALMTERQLTAAARRINLSQPAMSAAIARLRNYFHDDLFVMQGRELILT). The segment at residues 23–42 (LTAAARRINLSQPAMSAAIA) is a DNA-binding region (H-T-H motif).

The protein belongs to the LysR transcriptional regulatory family.

Its function is as follows. NodD regulates the expression of the nodABCFE genes which encode other nodulation proteins. NodD is also a negative regulator of its own expression. Binds flavonoids as inducers. The protein is Nodulation protein D 1 (nodD1) of Neorhizobium galegae (Rhizobium galegae).